The following is a 1004-amino-acid chain: Kinesin-like protein KIN-7I (1004 aa).

In terms of domain architecture, Kinesin motor spans 6–326 (KILVSVRVRP…LLFATCAKEV (321 aa)). An ATP-binding site is contributed by 89-96 (GQTSSGKT). Coiled coils occupy residues 335–402 (VVSE…AQSR), 517–576 (KKEY…QKQS), and 634–661 (SVEKEDTKKNLSSKKEDLKQNLSMDQSE). 3 disordered regions span residues 567–599 (EQSVEKQKQSPKKEEMEQYLSRDMSEQVTKSLP), 628–671 (SQQT…PEDE), and 802–830 (TMQHHSTHSDDTDTKTMKPENTDDGGEKT). Composition is skewed to basic and acidic residues over residues 569 to 582 (SVEKQKQSPKKEEM) and 634 to 652 (SVEKEDTKKNLSSKKEDLK). Residues 653-663 (QNLSMDQSEQL) are compositionally biased toward polar residues. Residue lysine 881 forms a Glycyl lysine isopeptide (Lys-Gly) (interchain with G-Cter in ubiquitin) linkage.

This sequence belongs to the TRAFAC class myosin-kinesin ATPase superfamily. Kinesin family. KIN-7 subfamily.

This is Kinesin-like protein KIN-7I from Arabidopsis thaliana (Mouse-ear cress).